A 117-amino-acid chain; its full sequence is NADH-ubiquinone oxidoreductase chain 3 (117 aa).

Helical transmembrane passes span 1–21 (MKFIFMYFIFIILISSILLLL), 58–78 (FLMTMMFLIFDVEIILFLPII), and 86–106 (TMISYLMISIFLILLITTLIL).

Belongs to the complex I subunit 3 family.

It is found in the mitochondrion membrane. It carries out the reaction a ubiquinone + NADH + 5 H(+)(in) = a ubiquinol + NAD(+) + 4 H(+)(out). Core subunit of the mitochondrial membrane respiratory chain NADH dehydrogenase (Complex I) that is believed to belong to the minimal assembly required for catalysis. Complex I functions in the transfer of electrons from NADH to the respiratory chain. The immediate electron acceptor for the enzyme is believed to be ubiquinone. The protein is NADH-ubiquinone oxidoreductase chain 3 (ND3) of Apis mellifera ligustica (Common honeybee).